The following is a 72-amino-acid chain: Large ribosomal subunit protein bL31 (72 aa).

It belongs to the bacterial ribosomal protein bL31 family. Type A subfamily. In terms of assembly, part of the 50S ribosomal subunit.

In terms of biological role, binds the 23S rRNA. The chain is Large ribosomal subunit protein bL31 from Rhodospirillum rubrum (strain ATCC 11170 / ATH 1.1.1 / DSM 467 / LMG 4362 / NCIMB 8255 / S1).